The following is a 187-amino-acid chain: Elongation factor P (187 aa).

Belongs to the elongation factor P family.

The protein resides in the cytoplasm. Its pathway is protein biosynthesis; polypeptide chain elongation. Involved in peptide bond synthesis. Stimulates efficient translation and peptide-bond synthesis on native or reconstituted 70S ribosomes in vitro. Probably functions indirectly by altering the affinity of the ribosome for aminoacyl-tRNA, thus increasing their reactivity as acceptors for peptidyl transferase. The chain is Elongation factor P from Tolumonas auensis (strain DSM 9187 / NBRC 110442 / TA 4).